A 92-amino-acid chain; its full sequence is Calitoxin (92 aa).

The signal sequence occupies residues 1–20 (MKTQVLVVLVLCVVFCLAES). The propeptide occupies 21–42 (RNSMTSEERGLVSLMRQRDDIA). Intrachain disulfides connect Cys-47–Cys-86, Cys-49–Cys-77, and Cys-67–Cys-87.

Belongs to the sea anemone sodium channel inhibitory toxin family. As to expression, expressed both outside and in acontia, a specialised envenomation structure laden with batteries of venom-containing nematocysts found only in the superfamily Metridioidea.

Its subcellular location is the secreted. It is found in the nematocyst. Its function is as follows. In neuromuscular preparation of crustaceans, the toxin increased neurotransmitter release, causing repetitive firing of the axons. May affect sodium channels (Nav). The sequence is that of Calitoxin from Calliactis polypus (Hermit crab anemone).